Here is a 476-residue protein sequence, read N- to C-terminus: Retinoic acid receptor gamma (476 aa).

Residues 1–109 (MANSSKERLC…PPPPPRVYKP (109 aa)) are modulating. The span at 81 to 96 (STVETQSTSSEEMVPS) shows a compositional bias: low complexity. Residues 81–102 (STVETQSTSSEEMVPSSPSPPP) are disordered. 2 consecutive NR C4-type zinc fingers follow at residues 110–130 (CFVC…CEGC) and 146–170 (CHRD…LQKC). Residues 110-175 (CFVCNDKSSG…RLQKCFQVGM (66 aa)) constitute a DNA-binding region (nuclear receptor). The hinge stretch occupies residues 176 to 205 (SKEAVRNDRNKKKKEIKEEVVLPDSYEMPP). Positions 184–189 (RNKKKK) match the Nuclear localization signal motif. Residues 206–440 (EMEELIQKVS…PLIREMLENP (235 aa)) enclose the NR LBD domain. Residues 435–476 (EMLENPEAFEDGAATPKPSERSSSESSNGSPTGEDSSGSKTP) form a disordered region. Polar residues predominate over residues 462-476 (NGSPTGEDSSGSKTP).

The protein belongs to the nuclear hormone receptor family. NR1 subfamily. In terms of assembly, heterodimer; with a rxr molecule. Binds DNA preferentially as a rar/rxr heterodimer. Expressed in embryos, tadpoles and various adult tissue such as kidney, testis, brain, liver, skeletal muscle and spleen.

Its subcellular location is the nucleus. Functionally, receptor for retinoic acid. Retinoic acid receptors bind as heterodimers to their target response elements in response to their ligands, all-trans or 9-cis retinoic acid, and regulate gene expression in various biological processes. The rar/rxr heterodimers bind to the retinoic acid response elements (RARE) composed of tandem 5'-AGGTCA-3' sites known as DR1-DR5. This chain is Retinoic acid receptor gamma (rarg), found in Xenopus laevis (African clawed frog).